The following is an 87-amino-acid chain: Small ribosomal subunit protein bS20 (87 aa).

The interval 1-22 (MANIKSQIKRIGTNKKAQERNK) is disordered.

Belongs to the bacterial ribosomal protein bS20 family.

Functionally, binds directly to 16S ribosomal RNA. In Clavibacter sepedonicus (Clavibacter michiganensis subsp. sepedonicus), this protein is Small ribosomal subunit protein bS20.